Consider the following 680-residue polypeptide: DNA-directed RNA polymerase subunit beta' (680 aa).

Cys69, Cys71, Cys87, and Cys90 together coordinate Zn(2+). Mg(2+)-binding residues include Asp489, Asp491, and Asp493.

This sequence belongs to the RNA polymerase beta' chain family. RpoC1 subfamily. As to quaternary structure, in plastids the minimal PEP RNA polymerase catalytic core is composed of four subunits: alpha, beta, beta', and beta''. When a (nuclear-encoded) sigma factor is associated with the core the holoenzyme is formed, which can initiate transcription. Requires Mg(2+) as cofactor. It depends on Zn(2+) as a cofactor.

The protein resides in the plastid. The protein localises to the chloroplast. It catalyses the reaction RNA(n) + a ribonucleoside 5'-triphosphate = RNA(n+1) + diphosphate. DNA-dependent RNA polymerase catalyzes the transcription of DNA into RNA using the four ribonucleoside triphosphates as substrates. The chain is DNA-directed RNA polymerase subunit beta' from Citrus sinensis (Sweet orange).